We begin with the raw amino-acid sequence, 422 residues long: MILVKDAIINGKKQDLLVEGNIIKKIGNVPISEVSKDETEIIDGKNCILIPGLVNTHTHIPMSLFRGVADDIPLMEWLSGHIWPMESKLNEKIVYAGTLLGAVEMIKSGTTAFNDMYFFLDSIIKAVDETGIRSTIAYGMIDLFNEEKREKELKSAKKSIEMIKKLNNSRITGALGPHAPYTCSKELLESTNALAREYNVPIHIHMNETVDEINQVLEKTKMRPFEYLNSFGFFDNVTTVCAHCVHLNDSEIKIIKEKNIFVAHNPISNLKLASGVSPVAKLLENEVNITLGTDGCGSNNSLNLFEEMKTAALIHKGVNLNPVLVTAKEAFEFGTLNGAKALNINSGEIKEGKLADFALINVKKPYLTPRENIESHLVYSFNGAVDSVVIDGKLTLKDGKMVTIDEEKVYELAEEAYLELTK.

Positions 57 and 59 each coordinate Zn(2+). Glu-86 and His-178 together coordinate substrate. His-205 provides a ligand contact to Zn(2+). Residues Glu-208 and Asp-294 each coordinate substrate. Asp-294 is a Zn(2+) binding site.

Belongs to the metallo-dependent hydrolases superfamily. MTA/SAH deaminase family. Homotetramer. Zn(2+) serves as cofactor.

The enzyme catalyses 5'-deoxyadenosine + H2O + H(+) = 5'-deoxyinosine + NH4(+). It carries out the reaction S-adenosyl-L-homocysteine + H2O + H(+) = S-inosyl-L-homocysteine + NH4(+). The catalysed reaction is S-methyl-5'-thioadenosine + H2O + H(+) = S-methyl-5'-thioinosine + NH4(+). It catalyses the reaction adenosine + H2O + H(+) = inosine + NH4(+). It functions in the pathway amino-acid biosynthesis; S-adenosyl-L-methionine biosynthesis. Functionally, catalyzes the deamination of three SAM-derived enzymatic products, namely 5'-deoxyadenosine, S-adenosyl-L-homocysteine, and 5'-methylthioadenosine, to produce the inosine analogs. Can also deaminate adenosine. The preferred substrate for this enzyme is 5'-deoxyadenosine, but all these substrates are efficiently deaminated. Likely functions in a S-adenosyl-L-methionine (SAM) recycling pathway from S-adenosyl-L-homocysteine (SAH) produced from SAM-dependent methylation reactions. May also be involved in the recycling of 5'-deoxyadenosine, whereupon the 5'-deoxyribose moiety of 5'-deoxyinosine is further metabolized to deoxyhexoses used for the biosynthesis of aromatic amino acids in methanogens. In Methanococcus vannielii (strain ATCC 35089 / DSM 1224 / JCM 13029 / OCM 148 / SB), this protein is 5'-deoxyadenosine deaminase.